The following is a 381-amino-acid chain: Creatine kinase B-type (381 aa).

The residue at position 4 (serine 4) is a Phosphoserine. A Phosphagen kinase N-terminal domain is found at 11–98; it reads KLRFPAEDEF…FDPIIEDRHG (88 aa). Threonine 35 bears the Phosphothreonine mark. Residue lysine 45 forms a Glycyl lysine isopeptide (Lys-Gly) (interchain with G-Cter in ubiquitin) linkage. Valine 72 provides a ligand contact to creatine. Basic and acidic residues predominate over residues 96–110; it reads RHGGYQPSDEHKTDL. The disordered stretch occupies residues 96–122; the sequence is RHGGYQPSDEHKTDLNPDNLQGGDDLD. Lysine 107 is covalently cross-linked (Glycyl lysine isopeptide (Lys-Gly) (interchain with G-Cter in ubiquitin)). The residue at position 125 (tyrosine 125) is a Phosphotyrosine. One can recognise a Phosphagen kinase C-terminal domain in the interval 125–367; the sequence is YVLSSRVRTG…KLLIEMEQRL (243 aa). Residues 128 to 132, arginine 130, arginine 132, and histidine 191 contribute to the ATP site; that span reads SSRVR. The segment at 130 to 138 is internal MTS-like signal; it reads RVRTGRSIR. At serine 199 the chain carries Phosphoserine. Position 232 (glutamate 232) interacts with creatine. Arginine 236 is an ATP binding site. 3'-nitrotyrosine is present on tyrosine 269. Serine 285 is a creatine binding site. Position 292 (arginine 292) interacts with ATP. Serine 309 is subject to Phosphoserine. ATP is bound by residues arginine 320, 320-325, and aspartate 335; that span reads RGTGGV. The residue at position 322 (threonine 322) is a Phosphothreonine. Lysine 381 is covalently cross-linked (Glycyl lysine isopeptide (Lys-Gly) (interchain with G-Cter in ubiquitin)).

The protein belongs to the ATP:guanido phosphotransferase family. Dimer of identical or non-identical chains, which can be either B (brain type) or M (muscle type). With MM being the major form in skeletal muscle and myocardium, MB existing in myocardium, and BB existing in many tissues, especially brain. Interacts with SLC12A6 (via C-terminus); the interaction may be required for SLC12A6 potassium-chloride cotransport activity. Post-translationally, ubiquitinated by the ECS(ASB9) complex, leading to its degradation by the proteasome. In terms of tissue distribution, in the kidney localized primarily in the outer medulla in the thick ascending limb and distal convoluted tubule.

The protein resides in the cytoplasm. Its subcellular location is the cytosol. The protein localises to the mitochondrion. It localises to the cell membrane. It carries out the reaction creatine + ATP = N-phosphocreatine + ADP + H(+). Functionally, reversibly catalyzes the transfer of phosphate between ATP and various phosphogens (e.g. creatine phosphate). Creatine kinase isoenzymes play a central role in energy transduction in tissues with large, fluctuating energy demands, such as skeletal muscle, heart, brain and spermatozoa. Acts as a key regulator of adaptive thermogenesis as part of the futile creatine cycle: localizes to the mitochondria of thermogenic fat cells and acts by mediating phosphorylation of creatine to initiate a futile cycle of creatine phosphorylation and dephosphorylation. During the futile creatine cycle, creatine and N-phosphocreatine are in a futile cycle, which dissipates the high energy charge of N-phosphocreatine as heat without performing any mechanical or chemical work. This Rattus norvegicus (Rat) protein is Creatine kinase B-type (Ckb).